Reading from the N-terminus, the 407-residue chain is Magnesium-protoporphyrin IX monomethyl ester [oxidative] cyclase 1, chloroplastic (407 aa).

Positions 1 to 10 (MQTTLKQQRA) are enriched in polar residues. Residues 1-28 (MQTTLKQQRASGRVSARQPFRSAAVARP) are disordered.

It belongs to the AcsF family. Fe cation serves as cofactor.

It is found in the plastid. The protein resides in the chloroplast thylakoid membrane. The enzyme catalyses Mg-protoporphyrin IX 13-monomethyl ester + 3 NADPH + 3 O2 + 2 H(+) = 3,8-divinyl protochlorophyllide a + 3 NADP(+) + 5 H2O. Its pathway is porphyrin-containing compound metabolism; chlorophyll biosynthesis. In terms of biological role, catalyzes the formation of the isocyclic ring in chlorophyll biosynthesis under oxygen- and copper-deficient conditions. Mediates the cyclase reaction, which results in the formation of divinylprotochlorophyllide (Pchlide) characteristic of all chlorophylls from magnesium-protoporphyrin IX 13-monomethyl ester (MgPMME). This Chlamydomonas reinhardtii (Chlamydomonas smithii) protein is Magnesium-protoporphyrin IX monomethyl ester [oxidative] cyclase 1, chloroplastic (CRD1).